Here is a 341-residue protein sequence, read N- to C-terminus: Large ribosomal subunit protein uL10 (341 aa).

A disordered region spans residues 301–341; the sequence is EAAPAAAPAAEEKAEEEKKEEEEEKKEDQELSGLDSIFGGF.

It belongs to the universal ribosomal protein uL10 family. In terms of assembly, part of the 50S ribosomal subunit. Forms part of the ribosomal stalk which helps the ribosome interact with GTP-bound translation factors. Forms a heptameric L10(L12)2(L12)2(L12)2 complex, where L10 forms an elongated spine to which the L12 dimers bind in a sequential fashion.

Its function is as follows. Forms part of the ribosomal stalk, playing a central role in the interaction of the ribosome with GTP-bound translation factors. The sequence is that of Large ribosomal subunit protein uL10 from Aeropyrum pernix (strain ATCC 700893 / DSM 11879 / JCM 9820 / NBRC 100138 / K1).